The sequence spans 355 residues: Glutamyl aminopeptidase (355 aa).

2 residues coordinate a divalent metal cation: H65 and D181. The active-site Proton acceptor is E213. A divalent metal cation-binding residues include E214, D236, and H319.

It belongs to the peptidase M42 family. Requires a divalent metal cation as cofactor.

It catalyses the reaction Release of N-terminal glutamate (and to a lesser extent aspartate) from a peptide.. This chain is Glutamyl aminopeptidase (pepA), found in Lactococcus lactis subsp. cremoris (strain MG1363).